The sequence spans 314 residues: Methionyl-tRNA formyltransferase (314 aa).

Residue 113–116 (SLLP) participates in (6S)-5,6,7,8-tetrahydrofolate binding.

This sequence belongs to the Fmt family.

It catalyses the reaction L-methionyl-tRNA(fMet) + (6R)-10-formyltetrahydrofolate = N-formyl-L-methionyl-tRNA(fMet) + (6S)-5,6,7,8-tetrahydrofolate + H(+). In terms of biological role, attaches a formyl group to the free amino group of methionyl-tRNA(fMet). The formyl group appears to play a dual role in the initiator identity of N-formylmethionyl-tRNA by promoting its recognition by IF2 and preventing the misappropriation of this tRNA by the elongation apparatus. The sequence is that of Methionyl-tRNA formyltransferase from Serratia proteamaculans (strain 568).